A 227-amino-acid chain; its full sequence is Cleavage and polyadenylation specificity factor subunit 5 (227 aa).

Residues 76-201 (MRRTVEGVLI…KLVAAPLFEL (126 aa)) form the Nudix hydrolase domain. Positions 102 to 104 (TFF) are interaction with RNA. A Nudix box motif is present at residues 109 to 130 (GELNPGEDEVEGLKRLMTEILG).

Belongs to the Nudix hydrolase family. CPSF5 subfamily. Homodimer (via N- and C-terminus); binds RNA as homodimer. Component of the cleavage factor Im (CFIm) complex.

Its subcellular location is the nucleus. The protein resides in the cytoplasm. Its function is as follows. Component of the cleavage factor Im (CFIm) complex that functions as an activator of the pre-mRNA 3'-end cleavage and polyadenylation processing required for the maturation of pre-mRNA into functional mRNAs. CFIm contributes to the recruitment of multiprotein complexes on specific sequences on the pre-mRNA 3'-end, so called cleavage and polyadenylation signals (pA signals). Most pre-mRNAs contain multiple pA signals, resulting in alternative cleavage and polyadenylation (APA) producing mRNAs with variable 3'-end formation. The CFIm complex acts as a key regulator of cleavage and polyadenylation site choice during APA through its binding to 5'-UGUA-3' elements localized in the 3'-untranslated region (UTR) for a huge number of pre-mRNAs. Binds to 5'-UGUA-3' elements localized upstream of pA signals that act as enhancers of pre-mRNA 3'-end processing. The homodimer mediates simultaneous sequence-specific recognition of two 5'-UGUA-3' elements within the pre-mRNA. Plays a role in somatic cell fate transitions and pluripotency by regulating widespread changes in gene expression through an APA-dependent function. Binds to chromatin. Binds to, but does not hydrolyze mono- and di-adenosine nucleotides. This chain is Cleavage and polyadenylation specificity factor subunit 5, found in Xenopus laevis (African clawed frog).